The chain runs to 699 residues: TBC1 domain family member 23 (699 aa).

A Rab-GAP TBC domain is found at 44-225 (PLPADLRAKV…AIWDGYLQQA (182 aa)). Serine 300 is modified (phosphoserine). Residues 334–446 (EGVRFFVVDC…LQQHLADINV (113 aa)) enclose the Rhodanese domain. Residues 459-479 (STSGSRSSINSVDGESPNGSS) are compositionally biased toward polar residues. The segment at 459–483 (STSGSRSSINSVDGESPNGSSDRGM) is disordered. Serine 469, serine 474, and serine 507 each carry phosphoserine. Threonine 514 carries the phosphothreonine modification. The segment at 514–573 (TPVDRMSFNLPWPDRSCTERHVSSSDRVGKPYRGVKPVFSIGDEEEYDTDEIDSSSMSDD) is may mediate the interaction with C17orf75, FAM91A1 and WDR11. The may mediate the interaction with WASHC1 stretch occupies residues 514–699 (TPVDRMSFNL…IMKVLDALES (186 aa)). Phosphoserine occurs at positions 520 and 571. The may mediate the interaction with FKBP15 and WASHC2; required for endosome to Golgi trafficking stretch occupies residues 574 to 699 (DRKEVVNIQT…IMKVLDALES (126 aa)).

Directly interacts with GOLGA1 and GOLGA4. Interacts with FAM91A1, C17ORF75 and WDR11; the interaction recruits TBC1D23 to AP-1-derived vesicles. Directly interacts with WASHC1 and WASHC2A/FAM21A. Interacts with FKBP15. As to expression, isoform 1: Widely expressed, including in fetal adult brain (corpus callosum, pons, cerebellum), spinal cord, heart, skeletal muscle, thymus and bone marrow, and at lower levels in spleen. Hardly detected in liver, kidney, colon and testis. Isoform 2: Expressed at high levels in liver, kidney, colon and testis. Hardly detected in tissues expressing high levels of isoform 1. Expressed at low levels in spleen.

It is found in the golgi apparatus. Its subcellular location is the trans-Golgi network. It localises to the cytoplasmic vesicle. Putative Rab GTPase-activating protein which plays a role in vesicular trafficking. Involved in endosome-to-Golgi trafficking. Acts as a bridging protein by binding simultaneously to golgins, including GOLGA1 and GOLGA4, located at the trans-Golgi, and to the WASH complex, located on endosome-derived vesicles. Together with WDR11 complex facilitates the golgin-mediated capture of vesicles generated using AP-1. Plays a role in brain development, including in cortical neuron positioning. May also be important for neurite outgrowth, possibly through its involvement in membrane trafficking and cargo delivery, 2 processes that are essential for axonal and dendritic growth. May act as a general inhibitor of innate immunity signaling, strongly inhibiting multiple TLR and dectin/CLEC7A-signaling pathways. Does not alter initial activation events, but instead affects maintenance of inflammatory gene expression several hours after bacterial lipopolysaccharide (LPS) challenge. The chain is TBC1 domain family member 23 (TBC1D23) from Homo sapiens (Human).